The following is a 636-amino-acid chain: Dehydrogenase ARMGADRAFT_1018426 (636 aa).

A signal peptide spans 1 to 19 (MPALTYLLLAAIGASTVHS). Residues 49–50 (TA) and 70–71 (EG) contribute to the FAD site. Asn99 carries an N-linked (GlcNAc...) asparagine glycan. Residues Trp104 and 134–137 (NGLT) contribute to the FAD site. Asn253 carries an N-linked (GlcNAc...) asparagine glycan. Val280 is a binding site for FAD. N-linked (GlcNAc...) asparagine glycosylation is found at Asn333, Asn380, Asn394, and Asn498. His570 functions as the Proton acceptor in the catalytic mechanism. FAD contacts are provided by residues Ala603 and 614–615 (PS).

This sequence belongs to the GMC oxidoreductase family. FAD serves as cofactor.

It functions in the pathway secondary metabolite biosynthesis. Functionally, dehydrogenase, part of the gene cluster that mediates the biosynthesis of melleolides, a range of antifungal and phytotoxic polyketide derivatives composed of an orsellinic acid (OA) moiety esterified to various sesquiterpene alcohols. The first step in melleolides biosynthesis is performed by the delta(6)-protoilludene synthase PRO1 which catalyzes the cyclization of farnesyl diphosphate to protoilludene. The orsellinic acid synthase armB produces OA by condensing acetyl-CoA with 3 malonyl-CoA units in a three-round chain elongation reaction folowed by a C2-C7 ring closure. ArmB further catalyzes the trans-esterification of OA to the various sesquiterpene alcohols resulting from the hydroxylation of protoilludene. The melleolides cluster also includes 5 cytochrome P450 monooxygenases, 4 NAD(+)-dependent oxidoreductases, one flavin-dependent oxidoreductase, and one O-methyltransferase. The cytochrome P450 monooxygenases may be involved in protoilludene hydroxylation to elaborate melleolides with multiple alcohol groups, such as melleolide D, which carries alcohol functionalities at C-4, C-5, C-10, and C-13. The role of the NAD(+)-dependent enzymes remains unknown. Numerous melleolides, including arnamial, show 5'-O-methylation of the aromatic moiety which may be catalyzed by the methyltransferase encoded in the cluster. The flavin-dependent oxidoreductase might represent the dehydrogenase yielding the aldehyde in position 1 of arnamial and other melleolides. Finally, several halogenase localized outside of the cluster, are able to catalyze the transfer of a single chlorine atom to the melleolide backbone, resulting in a 6'-chloromelleolide product. This chain is Dehydrogenase ARMGADRAFT_1018426, found in Armillaria gallica (Bulbous honey fungus).